A 398-amino-acid polypeptide reads, in one-letter code: Metalloprotease MmpA (398 aa).

His22 serves as a coordination point for Zn(2+). Glu23 is an active-site residue. His26 is a Zn(2+) binding site. 3 helical membrane-spanning segments follow: residues Phe117–Val139, Gln316–Leu338, and Ala362–Trp381. Positions Ala130–Asp203 constitute a PDZ domain.

It belongs to the peptidase M50B family. Zn(2+) is required as a cofactor.

The protein resides in the cell inner membrane. Its function is as follows. Involved in the regulated intramembrane proteolysis (RIP) of the short isoform of PodJ protein (PodJS), during the swarmer-to-stalked transition. The cleavage occurs near or within the single transmembrane of PodJS thereby releasing the N-terminal segment into the cytoplasm for subsequent degradation. It contributes to preserve asymmetry in the next cell cycle through sequential degradation. This Caulobacter vibrioides (strain ATCC 19089 / CIP 103742 / CB 15) (Caulobacter crescentus) protein is Metalloprotease MmpA (mmpA).